The chain runs to 1807 residues: Vitellogenin-2 (1807 aa).

An N-terminal signal peptide occupies residues 1-16 (MWFPVTLLFLAGVAVA). Positions 24-819 (WETGNEYQYS…LIPKYVYVGV (796 aa)) constitute a Vitellogenin domain. Residues C180 and C224 are joined by a disulfide bond. Residues 334-402 (SDSDNRRVRH…SSSSSSEEEN (69 aa)) form a disordered region. The span at 346–397 (VSQNSEQENSSESSKSSSQSSSSSSSASSSSSSSSSSSSSSSSSSSSSSSSS) shows a compositional bias: low complexity. N-linked (GlcNAc...) asparagine glycans are attached at residues N354, N579, N635, N1181, N1304, N1373, and N1506. Positions 1448 to 1636 (QSCTLDKDKV…TYAMTQENCQ (189 aa)) constitute a VWFD domain. Cystine bridges form between C1450–C1599 and C1472–C1635. 2 disordered regions span residues 1635 to 1655 (CQGP…HEFP) and 1684 to 1723 (NRNK…KKHN). N1693 carries an N-linked (GlcNAc...) asparagine glycan. Positions 1700–1714 (KKQYQANSQESGSSE) are enriched in polar residues.

The protein localises to the secreted. In terms of biological role, precursor of the egg-yolk proteins that are sources of nutrients during embryonic development. This is Vitellogenin-2 from Solenopsis invicta (Red imported fire ant).